The primary structure comprises 2118 residues: Cilia- and flagella-associated protein 65 (2118 aa).

The chain crosses the membrane as a helical span at residues 6–26 (GSLRALLLAAAAAAAAAAGAV). An MSP domain is found at 615-736 (FLHSNPEFGP…HTPRLTTDLP (122 aa)). Disordered stretches follow at residues 1007–1029 (APLL…LDAG), 1764–1909 (SGGS…DDFA), and 1924–1958 (AGGG…APPR). Residues 1825 to 1834 (GGAGGAPGGD) show a composition bias toward gly residues. Residues 1840–1849 (RPGTPSMTAA) show a composition bias toward low complexity. Positions 1850–1859 (AHHHHHHPRH) are enriched in basic residues. Low complexity-rich tracts occupy residues 1892–1902 (SISGAPDPDSA) and 1936–1949 (PGGS…ELAP). Positions 2016 to 2045 (AVRAAAEAARAEAEARAAAEAATKAAAEAE) form a coiled coil.

This sequence belongs to the CFAP65 family.

It is found in the cell projection. It localises to the cilium. The protein resides in the flagellum membrane. The protein localises to the cytoplasm. May play a role in flagellar formation and mobility. This Chlamydomonas reinhardtii (Chlamydomonas smithii) protein is Cilia- and flagella-associated protein 65.